Consider the following 519-residue polypeptide: MSFYAAANPNAIPAPHIEYRALLPMLIVFGVACAGVLVEAFVPRAQRALTQTVLALGGLVAALIAVVSNTGLPRKLVAQSAIAADGPTLFIQGTILALSIGALLLIADRSIGADSDFVAQAADLPGSEQERASVQAGLRQTEVFPLAMFAVGGMMLFPAANDLITAFVALEVLSLPLYLLAGMARRRRLLSQEAAVKYFLLGAFSSAFFVYGLALVYGYAKSVEYGDIATALTASDRGDSLIIVGLALIGISLLFKLSGVPFHWWTPDVYQGAPTPITAFMAAGTKVAAFGALLRVFFVAFGGLAWDWRPVIWGVAIATMVVGAILGITQTDVKRLLAYSSIAHAGFVLTAFAATTRASESSVLFYLVAYGFMTIGAFAIVILVRDGDGEANHLSRWVGLGRRSPLVAGIFALFLLAMAGLPPTSGLWAKVAVFTAAYQGGAGPLVIVGVLASAVTAYYYLRIIVLMFAQEPAVEGPTVAVPGALASAAIALGVIVTVVLGIVPQPVLDLADKAVPFLR.

14 helical membrane-spanning segments follow: residues 22-42 (LLPMLIVFGVACAGVLVEAFV), 53-73 (VLALGGLVAALIAVVSNTGLP), 87-107 (PTLFIQGTILALSIGALLLIA), 141-161 (TEVFPLAMFAVGGMMLFPAAN), 163-183 (LITAFVALEVLSLPLYLLAGM), 198-218 (YFLLGAFSSAFFVYGLALVYG), 242-262 (IIVGLALIGISLLFKLSGVPF), 287-307 (VAAFGALLRVFFVAFGGLAWD), 310-330 (PVIWGVAIATMVVGAILGITQ), 336-356 (LLAYSSIAHAGFVLTAFAATT), 363-383 (VLFYLVAYGFMTIGAFAIVIL), 406-426 (LVAGIFALFLLAMAGLPPTSG), 442-461 (AGPLVIVGVLASAVTAYYYL), and 483-503 (GALASAAIALGVIVTVVLGIV).

This sequence belongs to the complex I subunit 2 family. In terms of assembly, NDH-1 is composed of 14 different subunits. Subunits NuoA, H, J, K, L, M, N constitute the membrane sector of the complex.

The protein resides in the cell membrane. The catalysed reaction is a quinone + NADH + 5 H(+)(in) = a quinol + NAD(+) + 4 H(+)(out). NDH-1 shuttles electrons from NADH, via FMN and iron-sulfur (Fe-S) centers, to quinones in the respiratory chain. The immediate electron acceptor for the enzyme in this species is believed to be a menaquinone. Couples the redox reaction to proton translocation (for every two electrons transferred, four hydrogen ions are translocated across the cytoplasmic membrane), and thus conserves the redox energy in a proton gradient. The protein is NADH-quinone oxidoreductase subunit N of Acidothermus cellulolyticus (strain ATCC 43068 / DSM 8971 / 11B).